A 760-amino-acid chain; its full sequence is MALPSLGQDSWSLLRVFFFQLFLLPSLPPASGTGGQGPMPRVKYHAGDGHRALSFFQQKGLRDFDTLLLSDDGNTLYVGAREAVLALNIQNPGIPRLKNMIPWPASERKKTECAFKKKSNETQCFNFIRVLVSYNATHLYACGTFAFSPACTFIELQDSLLLPILIDKVMDGKGQSPFDPVHKHTAVLVDGMLYSGTMNNFLGSEPILMRTLGSQPVLKTDIFLRWLHADASFVAAIPSTQVVYFFFEETASEFDFFEELYISRVAQVCKNDVGGEKLLQKKWTTFLKAQLLCAQPGQLPFNIIRHAVLLPADSPSVSRIYAVFTSQWQVGGTRSSAVCAFSLTDIERVFKGKYKELNKETSRWTTYRGSEVSPRPGSCSMGPSSDKALTFMKDHFLMDEHVVGTPLLVKSGVEYTRLAVESARGLDGSSHVVMYLGTSTGSLHKAVVPQDSSAYLVEEIQLSPDSEPVRNLQLAPAQGAVFAGFSGGIWRVPRANCSVYESCVDCVLARDPHCAWDPESRLCSLLSGSTKPWKQDMERGNPEWVCTRGPMARSPRRQSPPQLIKEVLTVPNSILELPCPHLSALASYHWSHGRAKISEASATVYNGSLLLLPQDGVGGLYQCVATENGYSYPVVSYWVDSQDQPLALDPELAGVPRERVQVPLTRVGGGASMAAQRSYWPHFLIVTVLLAIVLLGVLTLLLASPLGALRARGKVQGCGMLPPREKAPLSRDQHLQPSKDHRTSASDVDADNNHLGAEVA.

An N-terminal signal peptide occupies residues 1–32; that stretch reads MALPSLGQDSWSLLRVFFFQLFLLPSLPPASG. At 33–682 the chain is on the extracellular side; the sequence is TGGQGPMPRV…MAAQRSYWPH (650 aa). Residues 36–494 enclose the Sema domain; sequence QGPMPRVKYH…FSGGIWRVPR (459 aa). A disulfide bridge connects residues Cys113 and Cys124. 2 N-linked (GlcNAc...) asparagine glycosylation sites follow: Asn120 and Asn135. 3 disulfides stabilise this stretch: Cys142–Cys151, Cys269–Cys379, and Cys293–Cys339. Asn496 carries N-linked (GlcNAc...) asparagine glycosylation. The region spanning 496–547 is the PSI domain; that stretch reads NCSVYESCVDCVLARDPHCAWDPESRLCSLLSGSTKPWKQDMERGNPEWVCT. Disulfide bonds link Cys497–Cys514, Cys506–Cys523, and Cys579–Cys623. The Ig-like C2-type domain occupies 572-630; that stretch reads NSILELPCPHLSALASYHWSHGRAKISEASATVYNGSLLLLPQDGVGGLYQCVATENGY. Asn606 carries an N-linked (GlcNAc...) asparagine glycan. A helical membrane pass occupies residues 683–703; it reads FLIVTVLLAIVLLGVLTLLLA. The Cytoplasmic segment spans residues 704-760; sequence SPLGALRARGKVQGCGMLPPREKAPLSRDQHLQPSKDHRTSASDVDADNNHLGAEVA. A disordered region spans residues 720-760; it reads MLPPREKAPLSRDQHLQPSKDHRTSASDVDADNNHLGAEVA. Over residues 723 to 744 the composition is skewed to basic and acidic residues; the sequence is PREKAPLSRDQHLQPSKDHRTS.

Belongs to the semaphorin family. As to quaternary structure, interacts with PLXNB1, PLXNB2 and PLXNB3. Interacts with PLXND1. Interacts with TIMD2. In terms of tissue distribution, expressed in neurons and glia in the developing hippocampus.

It localises to the cell membrane. Cell surface receptor for PLXNB1, PLXNB2, PLXNB3 and PLXND1 that plays an important role in cell-cell signaling. Regulates glutamatergic and GABAergic synapse development. Promotes the development of inhibitory synapses in a PLXNB1-dependent manner and promotes the development of excitatory synapses in a PLXNB2-dependent manner. Plays a role in priming antigen-specific T-cells, promotes differentiation of Th1 T-helper cells, and thereby contributes to adaptive immunity. Promotes phosphorylation of TIMD2. Inhibits angiogenesis. Promotes axon growth cone collapse. Inhibits axonal extension by providing local signals to specify territories inaccessible for growing axons. The sequence is that of Semaphorin-4A (Sema4a) from Mus musculus (Mouse).